The sequence spans 140 residues: Profilin-2 (140 aa).

A2 carries the post-translational modification N-acetylalanine.

This sequence belongs to the profilin family. In terms of assembly, occurs in many kinds of cells as a complex with monomeric actin in a 1:1 ratio. Interacts with PFN2. As to quaternary structure, interacts with ACTMAP (via N-terminus); the interaction may facilitate efficient cleavage of the acetylated N-terminus of immature actin by ACTMAP. As to expression, highly expressed in brain, skeletal muscle and kidney and less strongly in heart, placenta, lung and liver.

The protein resides in the cytoplasm. Its subcellular location is the cytoskeleton. Binds to actin and affects the structure of the cytoskeleton. At high concentrations, profilin prevents the polymerization of actin, whereas it enhances it at low concentrations. By binding to PIP2, it inhibits the formation of IP3 and DG. This Homo sapiens (Human) protein is Profilin-2 (PFN2).